A 244-amino-acid polypeptide reads, in one-letter code: 5-oxoprolinase subunit A (244 aa).

Belongs to the LamB/PxpA family. As to quaternary structure, forms a complex composed of PxpA, PxpB and PxpC.

The enzyme catalyses 5-oxo-L-proline + ATP + 2 H2O = L-glutamate + ADP + phosphate + H(+). Functionally, catalyzes the cleavage of 5-oxoproline to form L-glutamate coupled to the hydrolysis of ATP to ADP and inorganic phosphate. This chain is 5-oxoprolinase subunit A, found in Escherichia coli (strain SE11).